Here is a 1187-residue protein sequence, read N- to C-terminus: DENN domain and WD repeat-containing protein SCD1 (1187 aa).

Positions Thr-19 to Asp-179 constitute a uDENN domain. The cDENN domain maps to Ser-199–Leu-330. Positions Leu-332–Ser-437 constitute a dDENN domain. Disordered stretches follow at residues Ser-508–Glu-536 and Ser-765–Trp-793. Residues Asn-526–Glu-536 show a composition bias toward basic and acidic residues. Positions Ser-779–Trp-793 are enriched in polar residues. 8 WD repeats span residues Gly-841–Arg-892, Gly-897–Glu-934, Gly-937–Thr-975, Arg-978–Lys-1017, Gly-1020–Val-1057, Cys-1060–Val-1099, Leu-1104–Val-1141, and Arg-1152–Ile-1187.

As to quaternary structure, interacts with FLS2. As to expression, expressed in roots, rosette and cauline leaves, buds and flowers.

It is found in the cell membrane. It localises to the cytoplasmic vesicle. Its subcellular location is the clathrin-coated vesicle. Involved in growth and development through its role in cytokinesis and polarized cell expansion. Required for plasma membrane internalization. May function in clathrin-mediated membrane trafficking, including plasma membrane endocytosis, essential to both cytokinesis and cell expansion. Acts as a negative regulator of basal resistance against bacteria. This Arabidopsis thaliana (Mouse-ear cress) protein is DENN domain and WD repeat-containing protein SCD1.